A 358-amino-acid chain; its full sequence is MSTAIRSGRQSNWGSFCDWVTNTNNRIYVGWFGVLMIPCLLAATICFIIAFVAAPPVDIDGIREPVAGSLIYGNNIISGAVVPSSNAIGLHFYPIWEAASLDEWLYNGGPFQLVVFHFLIGISAYMGRQWELSYRLGMRPWICVAYSAPLSAAFAVFLVYPFGQGSFSDAMPLGISGTFNYMLVFQAEHNILMHPFHMLGVAGVFGGSLFSAMHGSLVTSSLVRETTESESQNYGYKFGQEEETYNIVAAHGYFGRLIFQYASFNNSRSLHFFLGAWPVIGIWFTSMGISTMAFNLNGFNFNQSILDGQGRVVSTWADVLNRAGLGMEVMHERNAHNFPLDLAAAESTPVALQAPAIG.

Transmembrane regions (helical) follow at residues 28–45, 117–132, and 141–155; these read YVGW…AATI, HFLI…QWEL, and WICV…AAFA. Residue His117 participates in chlorophyll a binding. Residue Tyr125 participates in pheophytin a binding. Residues Asp169 and Glu188 each coordinate [CaMn4O5] cluster. The helical transmembrane segment at 196 to 217 threads the bilayer; that stretch reads FHMLGVAGVFGGSLFSAMHGSL. Chlorophyll a is bound at residue His197. A quinone contacts are provided by residues His214 and 263-264; that span reads SF. His214 provides a ligand contact to Fe cation. His271 is a Fe cation binding site. A helical transmembrane segment spans residues 273-287; that stretch reads FLGAWPVIGIWFTSM. [CaMn4O5] cluster contacts are provided by His331, Glu332, Asp341, and Ala343. A propeptide spanning residues 344-358 is cleaved from the precursor; it reads AAESTPVALQAPAIG.

This sequence belongs to the reaction center PufL/M/PsbA/D family. PSII is composed of 1 copy each of membrane proteins PsbA, PsbB, PsbC, PsbD, PsbE, PsbF, PsbH, PsbI, PsbJ, PsbK, PsbL, PsbM, PsbT, PsbX, PsbY, PsbZ, Psb30/Ycf12, peripheral proteins PsbO, CyanoQ (PsbQ), PsbU, PsbV and a large number of cofactors. It forms dimeric complexes. The D1/D2 heterodimer binds P680, chlorophylls that are the primary electron donor of PSII, and subsequent electron acceptors. It shares a non-heme iron and each subunit binds pheophytin, quinone, additional chlorophylls, carotenoids and lipids. D1 provides most of the ligands for the Mn4-Ca-O5 cluster of the oxygen-evolving complex (OEC). There is also a Cl(-1) ion associated with D1 and D2, which is required for oxygen evolution. The PSII complex binds additional chlorophylls, carotenoids and specific lipids. is required as a cofactor. In terms of processing, tyr-160 forms a radical intermediate that is referred to as redox-active TyrZ, YZ or Y-Z. C-terminally processed by CtpA; processing is essential to allow assembly of the oxygen-evolving complex and thus photosynthetic growth.

It localises to the cellular thylakoid membrane. The catalysed reaction is 2 a plastoquinone + 4 hnu + 2 H2O = 2 a plastoquinol + O2. Functionally, photosystem II (PSII) is a light-driven water:plastoquinone oxidoreductase that uses light energy to abstract electrons from H(2)O, generating O(2) and a proton gradient subsequently used for ATP formation. It consists of a core antenna complex that captures photons, and an electron transfer chain that converts photonic excitation into a charge separation. The D1/D2 (PsbA/PsbD) reaction center heterodimer binds P680, the primary electron donor of PSII as well as several subsequent electron acceptors. This is Photosystem II protein D1 1 from Synechococcus sp. (strain CC9902).